We begin with the raw amino-acid sequence, 37 residues long: Large ribosomal subunit protein bL36 (37 aa).

This sequence belongs to the bacterial ribosomal protein bL36 family.

The sequence is that of Large ribosomal subunit protein bL36 from Chromohalobacter salexigens (strain ATCC BAA-138 / DSM 3043 / CIP 106854 / NCIMB 13768 / 1H11).